We begin with the raw amino-acid sequence, 174 residues long: Period clock protein (174 aa).

Residues 46-134 are disordered; sequence SSEGTGAGTG…GTGTGTGTGT (89 aa). Repeat copies occupy residues 49–50, 51–52, 53–54, 55–56, 57–58, 59–60, 61–62, 63–64, 65–66, 67–68, 69–70, 71–72, 73–74, 75–76, 77–78, 79–80, 81–82, 83–84, 85–86, 87–88, 89–90, 91–92, 93–94, 95–96, 97–98, 99–100, 101–102, 103–104, 105–106, 107–108, 109–110, 111–112, 113–114, 115–116, 117–118, 119–120, 121–122, 123–124, 125–126, 127–128, 129–130, 131–132, 133–134, 135–136, and 137–138. The interval 49 to 138 is 45 X 2 AA tandem repeats of G-[TA]; sequence GTGAGTGTGT…GTGTGTGTGT (90 aa). Residues 50-134 show a composition bias toward gly residues; that stretch reads TGAGTGTGTG…GTGTGTGTGT (85 aa).

It is found in the plastid. Its subcellular location is the chloroplast. The sequence is that of Period clock protein from Acetabularia acetabulum (Mermaid's wine glass).